An 850-amino-acid chain; its full sequence is MLLVRTTSLNVSRMPVPCLARGIGILKGKYRLANLMNAQPSVRHVSSEIQQKDQQAGESNTATDTGVIHKSDEETLIYFDNVYARATSVWNPTLWYNLLLRNQSRDAVREKIRNLASPPNNPIYGLELKSTIPVKRDGGVFATFVVPPKYTKAQVNSLIQQNTARESSKNLLSYFTRVSAFPVKGSPWIEDLRRLPSTTIVIKFQGPALTEEEIYSLFRRYGTIIDIFPPTAANNNVAKVRYRSFRGAISAKNCVSGIEIHNTVLHIQYENIIRGHLVSNFFTNHTRIAIPVLFALLSIFAVLVFDPIREFSIEQKITHKYSLSWDNKFWKQLKTLTSSTMTSIKYYWGGPDDNHQRKHLWEERIEKVNDLKMWLEENNNTFVVIRGPRGSGKHDLVMQHTLQNRANVLYLDCDKLIKSRTDPKFLKNAASQLGYFPIFPWIDSVTGVLDLTVQGLTGQKTGLSETKESQFRNMLTTSLMSIRRIALKNYKAFVSTGDGTVNVKEEDYLQQHPEAKPVIVIDRFEGKSEINGFVYKELSDWAAMLVQMNIAHVIFLTETVASNQRLSESLPNQVFKNLILSDASKENSRNYVLSQLEDYLYYNKKSKGENVKEPESEKEIAENNDSDSEADTSVKEAEVILNEKELQEIDASLEPLGGRMLDLQAFVRRVKSGEEPSEALDKMIEQASEQITQMFLSDKIDSNKSAQAWELIELLSANPVIPFREIVNKPLFKAAPETGIMELENNGLITVSRDRGVLQEIRPAKPLYRAAFTYLINDPELAKVLKTRYLLKVVGFETGRIKKWEEELKPLGKVPDQKLFKTRLDYLSGKINASNAVITKCEEEIKNLSK.

A mitochondrion-targeting transit peptide spans 1–44 (MLLVRTTSLNVSRMPVPCLARGIGILKGKYRLANLMNAQPSVRH). Residues 44–66 (HVSSEIQQKDQQAGESNTATDTG) are disordered. Residues 45–287 (VSSEIQQKDQ…VSNFFTNHTR (243 aa)) lie on the Mitochondrial matrix side of the membrane. The segment covering 47–64 (SEIQQKDQQAGESNTATD) has biased composition (polar residues). The RRM domain maps to 198-272 (TTIVIKFQGP…TVLHIQYENI (75 aa)). A helical transmembrane segment spans residues 288–308 (IAIPVLFALLSIFAVLVFDPI). At 309 to 850 (REFSIEQKIT…CEEEIKNLSK (542 aa)) the chain is on the mitochondrial intermembrane side. A compositionally biased stretch (basic and acidic residues) spans 607 to 621 (KGENVKEPESEKEIA). A disordered region spans residues 607 to 633 (KGENVKEPESEKEIAENNDSDSEADTS).

This sequence belongs to the YME2 family.

Its subcellular location is the mitochondrion inner membrane. Plays a role in maintaining the mitochondrial genome and in controlling the mtDNA escape. Involved in the regulation of mtDNA nucleotide structure and number. May have a dispensable role in early maturation of pre-rRNA. This is Mitochondrial escape protein 2 (YME2) from Saccharomyces cerevisiae (strain YJM789) (Baker's yeast).